Consider the following 244-residue polypeptide: Phosphoadenosine 5'-phosphosulfate reductase (244 aa).

Cys239 acts as the Nucleophile; cysteine thiosulfonate intermediate in catalysis.

Belongs to the PAPS reductase family. CysH subfamily.

It is found in the cytoplasm. It carries out the reaction [thioredoxin]-disulfide + sulfite + adenosine 3',5'-bisphosphate + 2 H(+) = [thioredoxin]-dithiol + 3'-phosphoadenylyl sulfate. The protein operates within sulfur metabolism; hydrogen sulfide biosynthesis; sulfite from sulfate: step 3/3. Functionally, catalyzes the formation of sulfite from phosphoadenosine 5'-phosphosulfate (PAPS) using thioredoxin as an electron donor. The chain is Phosphoadenosine 5'-phosphosulfate reductase from Salmonella typhi.